The following is a 635-amino-acid chain: Threonine--tRNA ligase (635 aa).

Residues 1–61 (MVSIRLPDGS…DHDVALAIVT (61 aa)) form the TGS domain. The segment at 242–533 (DHRKLGKQLD…LIEHHAGAMP (292 aa)) is catalytic. Residues cysteine 333, histidine 384, and histidine 510 each contribute to the Zn(2+) site.

It belongs to the class-II aminoacyl-tRNA synthetase family. As to quaternary structure, homodimer. The cofactor is Zn(2+).

Its subcellular location is the cytoplasm. The catalysed reaction is tRNA(Thr) + L-threonine + ATP = L-threonyl-tRNA(Thr) + AMP + diphosphate + H(+). In terms of biological role, catalyzes the attachment of threonine to tRNA(Thr) in a two-step reaction: L-threonine is first activated by ATP to form Thr-AMP and then transferred to the acceptor end of tRNA(Thr). Also edits incorrectly charged L-seryl-tRNA(Thr). This chain is Threonine--tRNA ligase, found in Paraburkholderia xenovorans (strain LB400).